We begin with the raw amino-acid sequence, 29 residues long: Cyclotide mela-4 (29 aa).

Residues 1 to 29 constitute a cross-link (cyclopeptide (Gly-Asn)); the sequence is GKPICGETCFKGKCYTPGCTCSYPICKKN. Cystine bridges form between C5-C19, C9-C21, and C14-C26.

Post-translationally, this is a cyclic peptide. In terms of processing, contains 3 disulfide bonds.

Its function is as follows. Probably participates in a plant defense mechanism (Potential). Binds to and induces leakage in phospholipd membranes, particularly ones containing 1-palmitoyl-2-oleophosphatidylethanolamine (POPE). In vitro, displays cytotoxicity against cultured cells. Not active against Gram-negative bacterium E.coli ATCC 25922 or Gram-positive bacterium S.aureus ATCC 25923 up to a concentration of 64 uM. The sequence is that of Cyclotide mela-4 from Melicytus latifolius (Norfolk Island mahoe).